The following is a 598-amino-acid chain: MRNKICEELNNTDIGKLVNLCGWVDRRRDHGGVIFIDLRDHSGFLQITINPDDGADLFKQAETLRNETVIMVSGIINERPKDSINTNLSTGELELKVKDLQILNQIKNNLPFPVSIHDYENTKEELRLKYRYLDLRRGKLLENLKKRHKIIKVAREFLDNFGFTEVETPLLTKSTPEGARDFLVPARLSNGEFFALPQSPQLFKQLLMVGGLDKYYQIAKCFRDEDLRADRQPEFTQLDIEMSFISEEEIISFNESLIKKIWKEVLNINFNNAFPRMTWQAAMDNYGTDRPDTRYQMLLKDLGGVLGNIGFNIFTKAIKSGGYIKSITVKGGNSSISNVRIKPGGDIFKVAQDAGAGGLAFIRVKGDELETIGAIKNNLSEEHIADILKITEAKDGDLILLGAGDKQIVNQSLDRVRQYIAKELNLIDKSKWNFLWVTDFPMFERNEDENRYEALHHPFCSPKNIKSKDSENLKKEIESSTANAYDLVLNGLELGGGSLRIHEANLQRQVLKTVGLTDKEIDEKFGFLIEALEMGAPPHGGIAFGLDRITMLIIGADSIRETIAFPKNQQAKCLLTNAPSNVSESQLKELDIEITIDE.

Glutamate 177 contacts L-aspartate. The tract at residues 201 to 204 is aspartate; sequence QLFK. Arginine 223 lines the L-aspartate pocket. ATP is bound by residues 223-225 and glutamine 232; that span reads RDE. Histidine 456 contributes to the L-aspartate binding site. Glutamate 493 is an ATP binding site. An L-aspartate-binding site is contributed by arginine 500. 545-548 contributes to the ATP binding site; the sequence is GLDR.

This sequence belongs to the class-II aminoacyl-tRNA synthetase family. Type 1 subfamily. Homodimer.

The protein localises to the cytoplasm. The enzyme catalyses tRNA(Asx) + L-aspartate + ATP = L-aspartyl-tRNA(Asx) + AMP + diphosphate. Its function is as follows. Aspartyl-tRNA synthetase with relaxed tRNA specificity since it is able to aspartylate not only its cognate tRNA(Asp) but also tRNA(Asn). Reaction proceeds in two steps: L-aspartate is first activated by ATP to form Asp-AMP and then transferred to the acceptor end of tRNA(Asp/Asn). This chain is Aspartate--tRNA(Asp/Asn) ligase, found in Prochlorococcus marinus (strain AS9601).